A 337-amino-acid chain; its full sequence is Protein ABHD13 (337 aa).

A helical; Signal-anchor for type II membrane protein transmembrane segment spans residues 37-57 (FHLYGGIVLLLLIFVSIAGIL). Residues Ser193, Asp268, and His298 each act as charge relay system in the active site. Residue Asn299 is glycosylated (N-linked (GlcNAc...) asparagine).

This sequence belongs to the serine esterase family.

The protein localises to the membrane. The protein is Protein ABHD13 of Mus musculus (Mouse).